The primary structure comprises 518 residues: Glutamate--cysteine ligase (518 aa).

This sequence belongs to the glutamate--cysteine ligase type 1 family. Type 1 subfamily.

The enzyme catalyses L-cysteine + L-glutamate + ATP = gamma-L-glutamyl-L-cysteine + ADP + phosphate + H(+). It participates in sulfur metabolism; glutathione biosynthesis; glutathione from L-cysteine and L-glutamate: step 1/2. This chain is Glutamate--cysteine ligase, found in Salmonella gallinarum (strain 287/91 / NCTC 13346).